Reading from the N-terminus, the 445-residue chain is Trigger factor (445 aa).

The 86-residue stretch at 171–256 (NDIVIIDFKG…VHVVNEVETP (86 aa)) folds into the PPIase FKBP-type domain.

It belongs to the FKBP-type PPIase family. Tig subfamily.

It localises to the cytoplasm. The enzyme catalyses [protein]-peptidylproline (omega=180) = [protein]-peptidylproline (omega=0). Involved in protein export. Acts as a chaperone by maintaining the newly synthesized protein in an open conformation. Functions as a peptidyl-prolyl cis-trans isomerase. This chain is Trigger factor, found in Malacoplasma penetrans (strain HF-2) (Mycoplasma penetrans).